Reading from the N-terminus, the 266-residue chain is Glucosamine-6-phosphate deaminase (266 aa).

Residue D72 is the Proton acceptor; for enolization step of the active site. The active-site For ring-opening step is D141. The active-site Proton acceptor; for ring-opening step is H143. E148 serves as the catalytic For ring-opening step.

It belongs to the glucosamine/galactosamine-6-phosphate isomerase family. NagB subfamily. In terms of assembly, homohexamer.

The enzyme catalyses alpha-D-glucosamine 6-phosphate + H2O = beta-D-fructose 6-phosphate + NH4(+). Its pathway is amino-sugar metabolism; N-acetylneuraminate degradation; D-fructose 6-phosphate from N-acetylneuraminate: step 5/5. With respect to regulation, allosterically activated by N-acetylglucosamine 6-phosphate (GlcNAc6P). Catalyzes the reversible isomerization-deamination of glucosamine 6-phosphate (GlcN6P) to form fructose 6-phosphate (Fru6P) and ammonium ion. The sequence is that of Glucosamine-6-phosphate deaminase from Enterobacter sp. (strain 638).